We begin with the raw amino-acid sequence, 1396 residues long: ATP-binding cassette transporter pdr1 (1396 aa).

The disordered stretch occupies residues 1–22 (MSEQEKGKGDLDDPNSKNTKCP). Positions 73–320 (LHPINIIFRT…FLDLGFIPAK (248 aa)) constitute an ABC transporter 1 domain. Residues 412–622 (LQVFATAKVT…GYESIMLNEF (211 aa)) form the ABC transmembrane type-2 1 domain. 6 helical membrane passes run 431–451 (YIAT…SLFY), 466–486 (VLSN…DIIF), 512–532 (LVEF…VYFL), 543–563 (FIFY…FRFI), 572–592 (IAAL…GAVM), and 680–700 (GIIL…ANFI). The 244-residue stretch at 758–1001 (LCWRDLNFTV…LVNYFKRIHG (244 aa)) folds into the ABC transporter 2 domain. 794-801 (GENKSGKS) is a binding site for ATP. The ABC transmembrane type-2 2 domain maps to 1071–1286 (FQIYKISMRN…FLEGMIGGVL (216 aa)). 5 helical membrane passes run 1095–1115 (VAFN…QGVG), 1166–1186 (FIIA…TLFF), 1208–1228 (FAWL…IGIA), 1245–1265 (FVFI…VGFW), and 1361–1381 (CIMI…YYII).

Belongs to the ABC transporter superfamily. ABCG family. PDR (TC 3.A.1.205) subfamily.

It localises to the endoplasmic reticulum membrane. In Schizosaccharomyces pombe (strain 972 / ATCC 24843) (Fission yeast), this protein is ATP-binding cassette transporter pdr1 (pdr1).